Consider the following 173-residue polypeptide: Photosystem I assembly protein Ycf3 (173 aa).

TPR repeat units follow at residues 35–68 (AYLY…EDNQ), 72–105 (GETL…NPKQ), and 120–153 (GRMA…YPGG).

This sequence belongs to the Ycf3 family.

Its subcellular location is the cellular thylakoid membrane. Essential for the assembly of the photosystem I (PSI) complex. May act as a chaperone-like factor to guide the assembly of the PSI subunits. This chain is Photosystem I assembly protein Ycf3, found in Prochlorococcus marinus (strain NATL1A).